The primary structure comprises 629 residues: FAST kinase domain-containing protein 4 (629 aa).

In terms of domain architecture, RAP spans 559–617 (IAFLRWEFPNFNSRSKDLLGRFVLARRHVLAAGFLVVDVPYYEWLDLKSEWQKTAYLKD).

This sequence belongs to the FAST kinase family.

It is found in the mitochondrion matrix. Plays a role in processing of mitochondrial RNA precursors and in stabilization of a subset of mature mitochondrial RNA species, such as MT-CO1, MT-CO2, MT-CYB, MT-CO3, MT-ND3, MT-ND5 and MT-ATP8/6. May play a role in cell cycle progression. This Rattus norvegicus (Rat) protein is FAST kinase domain-containing protein 4 (Tbrg4).